The following is a 426-amino-acid chain: Enolase (426 aa).

Position 163 (glutamine 163) interacts with (2R)-2-phosphoglycerate. The Proton donor role is filled by glutamate 205. 3 residues coordinate Mg(2+): aspartate 242, glutamate 285, and aspartate 312. (2R)-2-phosphoglycerate contacts are provided by lysine 337, arginine 366, serine 367, and lysine 388. The Proton acceptor role is filled by lysine 337.

Belongs to the enolase family. As to quaternary structure, component of the RNA degradosome, a multiprotein complex involved in RNA processing and mRNA degradation. The cofactor is Mg(2+).

The protein localises to the cytoplasm. The protein resides in the secreted. Its subcellular location is the cell surface. The enzyme catalyses (2R)-2-phosphoglycerate = phosphoenolpyruvate + H2O. It functions in the pathway carbohydrate degradation; glycolysis; pyruvate from D-glyceraldehyde 3-phosphate: step 4/5. In terms of biological role, catalyzes the reversible conversion of 2-phosphoglycerate (2-PG) into phosphoenolpyruvate (PEP). It is essential for the degradation of carbohydrates via glycolysis. This chain is Enolase, found in Nitrosococcus oceani (strain ATCC 19707 / BCRC 17464 / JCM 30415 / NCIMB 11848 / C-107).